Here is a 297-residue protein sequence, read N- to C-terminus: Formamidopyrimidine-DNA glycosylase (297 aa).

The active-site Schiff-base intermediate with DNA is proline 2. The Proton donor role is filled by glutamate 3. The Proton donor; for beta-elimination activity role is filled by lysine 58. DNA contacts are provided by histidine 104, arginine 127, and lysine 170. The segment at 261–297 (NVYDREGEACRTPGCTGTVERMTQAGRSTFHCPQCQR) adopts an FPG-type zinc-finger fold. The active-site Proton donor; for delta-elimination activity is arginine 287.

Belongs to the FPG family. In terms of assembly, monomer. It depends on Zn(2+) as a cofactor.

The catalysed reaction is Hydrolysis of DNA containing ring-opened 7-methylguanine residues, releasing 2,6-diamino-4-hydroxy-5-(N-methyl)formamidopyrimidine.. It catalyses the reaction 2'-deoxyribonucleotide-(2'-deoxyribose 5'-phosphate)-2'-deoxyribonucleotide-DNA = a 3'-end 2'-deoxyribonucleotide-(2,3-dehydro-2,3-deoxyribose 5'-phosphate)-DNA + a 5'-end 5'-phospho-2'-deoxyribonucleoside-DNA + H(+). Involved in base excision repair of DNA damaged by oxidation or by mutagenic agents. Acts as a DNA glycosylase that recognizes and removes damaged bases. Has a preference for oxidized purines, such as 7,8-dihydro-8-oxoguanine (8-oxoG). Has AP (apurinic/apyrimidinic) lyase activity and introduces nicks in the DNA strand. Cleaves the DNA backbone by beta-delta elimination to generate a single-strand break at the site of the removed base with both 3'- and 5'-phosphates. This is Formamidopyrimidine-DNA glycosylase from Allorhizobium ampelinum (strain ATCC BAA-846 / DSM 112012 / S4) (Agrobacterium vitis (strain S4)).